Reading from the N-terminus, the 637-residue chain is SCF-associated factor 1 (637 aa).

Residues 14-63 enclose the F-box domain; the sequence is GLSPDIVQATLPFLSSDDIKNLSQTNKYYNTLLDFDHSKILWHELFHKAF. S16 bears the Phosphoserine mark. The RCC1 1 repeat unit spans residues 109–202; it reads AKFYSWGYLK…GFSFQILTES (94 aa). Residues 242 to 315 are disordered; the sequence is YPRITSRSNG…RTTMPSMGPH (74 aa). Over residues 244–260 the composition is skewed to polar residues; sequence RITSRSNGSTVNTTGTF. S266 is modified (phosphoserine). A compositionally biased stretch (low complexity) spans 289 to 305; the sequence is SGGAPAASPGGSHSGVP. The stretch at 565–635 is one RCC1 2 repeat; sequence GHLYSWGIES…GWQTGALIIK (71 aa).

As to quaternary structure, interacts with AAH1, SKP1 and CDC53. Component of the SCF(SAF1) complex containing CDC53, SKP1, HRT1 and SAF1.

The protein operates within protein modification; protein ubiquitination. Its function is as follows. Substrate recognition component of a SCF (SKP1-CUL1-F-box protein) E3 ubiquitin-protein ligase complex which mediates the ubiquitination and subsequent proteasomal degradation of target proteins. Targets AAH1 adenine deaminase for proteasome-dependent degradation upon entry into quiescence. Targets also URA7. This Saccharomyces cerevisiae (strain ATCC 204508 / S288c) (Baker's yeast) protein is SCF-associated factor 1 (SAF1).